The primary structure comprises 275 residues: Large ribosomal subunit protein uL2 (275 aa).

The segment at 224 to 275 is disordered; it reads AMNPVDHPHGGGEGKAPIGHPGPLTPWGKPALGYKTRKKGKASDKFIVKRRK. The segment covering 264-275 has biased composition (basic and acidic residues); that stretch reads KASDKFIVKRRK.

Belongs to the universal ribosomal protein uL2 family. As to quaternary structure, part of the 50S ribosomal subunit. Forms a bridge to the 30S subunit in the 70S ribosome.

In terms of biological role, one of the primary rRNA binding proteins. Required for association of the 30S and 50S subunits to form the 70S ribosome, for tRNA binding and peptide bond formation. It has been suggested to have peptidyltransferase activity; this is somewhat controversial. Makes several contacts with the 16S rRNA in the 70S ribosome. This chain is Large ribosomal subunit protein uL2, found in Caldanaerobacter subterraneus subsp. tengcongensis (strain DSM 15242 / JCM 11007 / NBRC 100824 / MB4) (Thermoanaerobacter tengcongensis).